The following is a 337-amino-acid chain: tRNA dimethylallyltransferase (337 aa).

24 to 31 lines the ATP pocket; that stretch reads GPTGAGKT. Position 26–31 (26–31) interacts with substrate; the sequence is TGAGKT. Interaction with substrate tRNA stretches follow at residues 49 to 52 and 188 to 192; these read DSRQ and QRAVR.

Belongs to the IPP transferase family. Monomer. Requires Mg(2+) as cofactor.

The enzyme catalyses adenosine(37) in tRNA + dimethylallyl diphosphate = N(6)-dimethylallyladenosine(37) in tRNA + diphosphate. Catalyzes the transfer of a dimethylallyl group onto the adenine at position 37 in tRNAs that read codons beginning with uridine, leading to the formation of N6-(dimethylallyl)adenosine (i(6)A). This chain is tRNA dimethylallyltransferase, found in Nitratidesulfovibrio vulgaris (strain DSM 19637 / Miyazaki F) (Desulfovibrio vulgaris).